Reading from the N-terminus, the 548-residue chain is Membrane protein insertase YidC (548 aa).

5 consecutive transmembrane segments (helical) span residues 6–26, 357–377, 424–444, 455–475, and 503–523; these read NLILIGLLFVSFLLWQQWESD, NWGVAIIMLTLLVRGIMFPLT, LGGCLPILVQMPIFIALYWAL, FALWITDLSVKDPFFVLPILM, and PIIFTFMFLWFPAGLTLYWLV.

Belongs to the OXA1/ALB3/YidC family. Type 1 subfamily. In terms of assembly, interacts with the Sec translocase complex via SecD. Specifically interacts with transmembrane segments of nascent integral membrane proteins during membrane integration.

The protein localises to the cell inner membrane. Required for the insertion and/or proper folding and/or complex formation of integral membrane proteins into the membrane. Involved in integration of membrane proteins that insert both dependently and independently of the Sec translocase complex, as well as at least some lipoproteins. Aids folding of multispanning membrane proteins. This Aeromonas hydrophila subsp. hydrophila (strain ATCC 7966 / DSM 30187 / BCRC 13018 / CCUG 14551 / JCM 1027 / KCTC 2358 / NCIMB 9240 / NCTC 8049) protein is Membrane protein insertase YidC.